A 432-amino-acid chain; its full sequence is Cytochrome c biogenesis protein CcsB (432 aa).

3 helical membrane-spanning segments follow: residues 18-38, 76-96, and 166-186; these read LRLA…GTGI, SGWF…CSWR, and VGPL…AWGA.

Belongs to the Ccs1/CcsB family. In terms of assembly, may interact with CcsA.

The protein localises to the cellular thylakoid membrane. Its function is as follows. Required during biogenesis of c-type cytochromes (cytochrome c6 and cytochrome f) at the step of heme attachment. The sequence is that of Cytochrome c biogenesis protein CcsB from Synechococcus sp. (strain CC9605).